A 176-amino-acid polypeptide reads, in one-letter code: Peptide methionine sulfoxide reductase MsrA (176 aa).

The active site involves Cys10.

It belongs to the MsrA Met sulfoxide reductase family.

It carries out the reaction L-methionyl-[protein] + [thioredoxin]-disulfide + H2O = L-methionyl-(S)-S-oxide-[protein] + [thioredoxin]-dithiol. It catalyses the reaction [thioredoxin]-disulfide + L-methionine + H2O = L-methionine (S)-S-oxide + [thioredoxin]-dithiol. In terms of biological role, has an important function as a repair enzyme for proteins that have been inactivated by oxidation. Catalyzes the reversible oxidation-reduction of methionine sulfoxide in proteins to methionine. This is Peptide methionine sulfoxide reductase MsrA from Chromobacterium violaceum (strain ATCC 12472 / DSM 30191 / JCM 1249 / CCUG 213 / NBRC 12614 / NCIMB 9131 / NCTC 9757 / MK).